The primary structure comprises 46 residues: Defensin Tk-AMP-D6.1 (46 aa).

Intrachain disulfides connect cysteine 3/cysteine 46, cysteine 14/cysteine 34, cysteine 20/cysteine 40, and cysteine 24/cysteine 42.

In terms of biological role, plant defense peptide. This is Defensin Tk-AMP-D6.1 from Triticum kiharae (Wheat).